Reading from the N-terminus, the 741-residue chain is Nuclear poly(A) polymerase 4 (741 aa).

ATP-binding positions include 101-103, 113-116, 114-116, Asp169, Lys230, Tyr239, and 248-249; these read FGS, ADID, DID, and GV. Residues Asp114, Asp116, and Asp169 each coordinate Mg(2+). A Nuclear localization signal motif is present at residues 485–492; sequence RRRQLPPF. 2 disordered regions span residues 494–556 and 683–741; these read FPNG…LSPQ and YEGF…RLLT. The span at 534 to 551 shows a compositional bias: basic and acidic residues; it reads KNDSEMMDVRPEKPEKRA. A compositionally biased stretch (polar residues) spans 701–717; it reads LYSQSGMSEDLQSNSLV. Basic and acidic residues predominate over residues 721–731; that stretch reads EKSEDRARSES. Polar residues predominate over residues 732-741; sequence FQKSQIRLLT.

It belongs to the poly(A) polymerase family. As to quaternary structure, monomer. Forms a complex with cleavage and polyadenylation specificity factor (CPSF) subunits CFIS2, FIPS3, PAPS1, PABN1, PABN2, PABN3 and FIPS5. The cofactor is Mg(2+). Requires Mn(2+) as cofactor. In terms of tissue distribution, mostly expressed in flowers (very active in pollen, sepals, styles, and stigmas), cotyledons and hypocotyls, and, to a lower extent, in roots (confined to the vascular tissue in the radicle) and leaves (in the vascular tissue and leaf petioles). Barely detected in stems. Active in the primary and secondary root systems.

The protein localises to the nucleus. The catalysed reaction is RNA(n) + ATP = RNA(n)-3'-adenine ribonucleotide + diphosphate. Functionally, essential protein. Polymerase that creates the 3'-poly(A) tail of mRNA's. Also required for the endoribonucleolytic cleavage reaction at some polyadenylation sites. May acquire specificity through interaction with a cleavage and polyadenylation specificity factor (CPSF) at its C-terminus. This is Nuclear poly(A) polymerase 4 from Arabidopsis thaliana (Mouse-ear cress).